Reading from the N-terminus, the 481-residue chain is Halobacterial transducer protein 9 (481 aa).

The region spanning 10-81 (SPFTVPLLLN…NKVADTPIDA (72 aa)) is the PAS domain. The Methyl-accepting transducer domain maps to 208 to 444 (DVERLEAASQ…EIAAMVDETA (237 aa)).

Belongs to the methyl-accepting chemotaxis (MCP) protein family.

It is found in the cytoplasm. Potentially involved in chemo- or phototactic signal transduction. This chain is Halobacterial transducer protein 9 (htr9), found in Halobacterium salinarum (strain ATCC 700922 / JCM 11081 / NRC-1) (Halobacterium halobium).